Consider the following 33-residue polypeptide: Protamine-1A (33 aa).

The disordered stretch occupies residues 1-33; sequence PRRRRSSSRPVRRRRRPRRVSRRRRRRGGRRRR.

As to expression, testis.

The protein localises to the nucleus. It localises to the chromosome. Functionally, protamines substitute for histones in the chromatin of sperm during the haploid phase of spermatogenesis. They compact sperm DNA into a highly condensed, stable and inactive complex. In Oncorhynchus mykiss (Rainbow trout), this protein is Protamine-1A.